The primary structure comprises 293 residues: ATP synthase gamma chain (293 aa).

The protein belongs to the ATPase gamma chain family. In terms of assembly, F-type ATPases have 2 components, CF(1) - the catalytic core - and CF(0) - the membrane proton channel. CF(1) has five subunits: alpha(3), beta(3), gamma(1), delta(1), epsilon(1). CF(0) has three main subunits: a, b and c.

Its subcellular location is the cell inner membrane. Functionally, produces ATP from ADP in the presence of a proton gradient across the membrane. The gamma chain is believed to be important in regulating ATPase activity and the flow of protons through the CF(0) complex. This is ATP synthase gamma chain from Gluconacetobacter diazotrophicus (strain ATCC 49037 / DSM 5601 / CCUG 37298 / CIP 103539 / LMG 7603 / PAl5).